A 439-amino-acid polypeptide reads, in one-letter code: Glutamine synthetase (439 aa).

The region spanning 12–93 (RSPKFVQLIF…VYGYIYKDGK (82 aa)) is the GS beta-grasp domain. The region spanning 99–439 (PRGVLKRVIE…EWELERYFFI (341 aa)) is the GS catalytic domain. Residues E122 and E124 each coordinate Mg(2+). Residue E172 coordinates ATP. The Mg(2+) site is built by E177 and E184. G229 is an L-glutamate binding site. H233 lines the Mg(2+) pocket. ATP is bound by residues 235–237 (HIS) and S237. L-glutamate contacts are provided by R283, E289, and R301. ATP contacts are provided by R301 and R306. E318 lines the Mg(2+) pocket. R320 is a binding site for L-glutamate.

The protein belongs to the glutamine synthetase family. As to quaternary structure, oligomer of 12 subunits arranged in the form of two hexagons. Requires Mg(2+) as cofactor.

The protein resides in the cytoplasm. The enzyme catalyses L-glutamate + NH4(+) + ATP = L-glutamine + ADP + phosphate + H(+). Functionally, probably involved in nitrogen metabolism via ammonium assimilation. Catalyzes the ATP-dependent biosynthesis of glutamine from glutamate and ammonia. In Pyrococcus abyssi (strain GE5 / Orsay), this protein is Glutamine synthetase.